The primary structure comprises 1185 residues: Ovostatin homolog 1 (1185 aa).

The signal sequence occupies residues 1-21 (MHVHVCVCLCVCIYTSSCVCA). N-linked (GlcNAc...) asparagine glycans are attached at residues asparagine 80, asparagine 155, asparagine 347, asparagine 452, and asparagine 725.

The protein belongs to the protease inhibitor I39 (alpha-2-macroglobulin) family. Homotetramer.

The protein localises to the secreted. Its function is as follows. Is able to inhibit all four classes of proteinases by a unique 'trapping' mechanism. In Homo sapiens (Human), this protein is Ovostatin homolog 1 (OVOS1).